The primary structure comprises 25 residues: Ribosome-inactivating protein charantin (25 aa).

In terms of assembly, monomer.

The enzyme catalyses Endohydrolysis of the N-glycosidic bond at one specific adenosine on the 28S rRNA.. Functionally, inhibits cell-free translation in a rabbit reticulocyte lysate system. In Momordica charantia (Bitter gourd), this protein is Ribosome-inactivating protein charantin.